A 420-amino-acid chain; its full sequence is Gamma-glutamyl phosphate reductase (420 aa).

Belongs to the gamma-glutamyl phosphate reductase family.

The protein localises to the cytoplasm. The enzyme catalyses L-glutamate 5-semialdehyde + phosphate + NADP(+) = L-glutamyl 5-phosphate + NADPH + H(+). It participates in amino-acid biosynthesis; L-proline biosynthesis; L-glutamate 5-semialdehyde from L-glutamate: step 2/2. In terms of biological role, catalyzes the NADPH-dependent reduction of L-glutamate 5-phosphate into L-glutamate 5-semialdehyde and phosphate. The product spontaneously undergoes cyclization to form 1-pyrroline-5-carboxylate. The polypeptide is Gamma-glutamyl phosphate reductase (Chlorobaculum parvum (strain DSM 263 / NCIMB 8327) (Chlorobium vibrioforme subsp. thiosulfatophilum)).